The primary structure comprises 326 residues: N-acetyl-gamma-glutamyl-phosphate reductase (326 aa).

Cysteine 155 is an active-site residue.

Belongs to the NAGSA dehydrogenase family. Type 1 subfamily.

The protein resides in the cytoplasm. It carries out the reaction N-acetyl-L-glutamate 5-semialdehyde + phosphate + NADP(+) = N-acetyl-L-glutamyl 5-phosphate + NADPH + H(+). The protein operates within amino-acid biosynthesis; L-arginine biosynthesis; N(2)-acetyl-L-ornithine from L-glutamate: step 3/4. Its function is as follows. Catalyzes the NADPH-dependent reduction of N-acetyl-5-glutamyl phosphate to yield N-acetyl-L-glutamate 5-semialdehyde. The protein is N-acetyl-gamma-glutamyl-phosphate reductase of Shewanella sp. (strain MR-4).